The following is a 196-amino-acid chain: Pyridoxal 5'-phosphate synthase subunit PdxT (196 aa).

47–49 (GES) is a binding site for L-glutamine. The Nucleophile role is filled by Cys79. L-glutamine-binding positions include Arg106 and 134–135 (IR). Catalysis depends on charge relay system residues His170 and Glu172.

This sequence belongs to the glutaminase PdxT/SNO family. In the presence of PdxS, forms a dodecamer of heterodimers. Only shows activity in the heterodimer.

The enzyme catalyses aldehydo-D-ribose 5-phosphate + D-glyceraldehyde 3-phosphate + L-glutamine = pyridoxal 5'-phosphate + L-glutamate + phosphate + 3 H2O + H(+). It carries out the reaction L-glutamine + H2O = L-glutamate + NH4(+). The protein operates within cofactor biosynthesis; pyridoxal 5'-phosphate biosynthesis. Its function is as follows. Catalyzes the hydrolysis of glutamine to glutamate and ammonia as part of the biosynthesis of pyridoxal 5'-phosphate. The resulting ammonia molecule is channeled to the active site of PdxS. The polypeptide is Pyridoxal 5'-phosphate synthase subunit PdxT (Bacillus cereus (strain G9842)).